The primary structure comprises 398 residues: UDP-N-acetylglucosamine--N-acetylmuramyl-(pentapeptide) pyrophosphoryl-undecaprenol N-acetylglucosamine transferase (398 aa).

UDP-N-acetyl-alpha-D-glucosamine contacts are provided by residues 11-13 (TGG), Asn-124, Arg-164, Ser-192, and Gln-318.

The protein belongs to the glycosyltransferase 28 family. MurG subfamily.

It is found in the cell membrane. It catalyses the reaction di-trans,octa-cis-undecaprenyl diphospho-N-acetyl-alpha-D-muramoyl-L-alanyl-D-glutamyl-meso-2,6-diaminopimeloyl-D-alanyl-D-alanine + UDP-N-acetyl-alpha-D-glucosamine = di-trans,octa-cis-undecaprenyl diphospho-[N-acetyl-alpha-D-glucosaminyl-(1-&gt;4)]-N-acetyl-alpha-D-muramoyl-L-alanyl-D-glutamyl-meso-2,6-diaminopimeloyl-D-alanyl-D-alanine + UDP + H(+). It functions in the pathway cell wall biogenesis; peptidoglycan biosynthesis. Its function is as follows. Cell wall formation. Catalyzes the transfer of a GlcNAc subunit on undecaprenyl-pyrophosphoryl-MurNAc-pentapeptide (lipid intermediate I) to form undecaprenyl-pyrophosphoryl-MurNAc-(pentapeptide)GlcNAc (lipid intermediate II). The protein is UDP-N-acetylglucosamine--N-acetylmuramyl-(pentapeptide) pyrophosphoryl-undecaprenol N-acetylglucosamine transferase of Deinococcus radiodurans (strain ATCC 13939 / DSM 20539 / JCM 16871 / CCUG 27074 / LMG 4051 / NBRC 15346 / NCIMB 9279 / VKM B-1422 / R1).